Reading from the N-terminus, the 308-residue chain is Testis-expressed protein 52 (308 aa).

In terms of tissue distribution, expressed in Testis.

In Mus musculus (Mouse), this protein is Testis-expressed protein 52.